A 304-amino-acid polypeptide reads, in one-letter code: Probable phytol kinase 2, chloroplastic (304 aa).

The N-terminal 59 residues, 1–59 (MVSLISAHLLSLPSSAPRSRPQSRPPLSPPAAAAAASCSFDLPRPRRLVADGSRRKGTM), are a transit peptide targeting the chloroplast. 7 consecutive transmembrane segments (helical) span residues 68 to 88 (SGLAHDLGSAAVTAGVALALL), 113 to 133 (IGMVFLLFWPLFSSGSYAPFL), 134 to 154 (AAVAPGINIIRMLLLGLGVMK), 170 to 190 (ELLKGPLYYATTITFATSIFW), 194 to 214 (PIAIALICNLCAGDGIADIVG), 231 to 251 (AGSIAMALAGFMASIGYMHYF), and 256 to 276 (FIEESWSLAFGFLVVSVTAAL).

This sequence belongs to the polyprenol kinase family.

The protein localises to the plastid. Its subcellular location is the chloroplast membrane. It carries out the reaction phytol + CTP = phytyl phosphate + CDP + H(+). Its pathway is cofactor biosynthesis; tocopherol biosynthesis. Its function is as follows. Involved in the activation and reutilization of phytol from chlorophyll degradation in plant metabolism, including tocopherol biosynthesis. Catalyzes the conversion of phytol to phytol monophosphate (PMP). The protein is Probable phytol kinase 2, chloroplastic of Oryza sativa subsp. japonica (Rice).